Here is a 264-residue protein sequence, read N- to C-terminus: Thymidylate synthase (264 aa).

Residue Arg-21 coordinates dUMP. His-51 serves as a coordination point for (6R)-5,10-methylene-5,6,7,8-tetrahydrofolate. 126–127 provides a ligand contact to dUMP; it reads RR. The Nucleophile role is filled by Cys-146. Residues 166-169, Asn-177, and 207-209 each bind dUMP; these read RSAD and HLY. Residue Asp-169 participates in (6R)-5,10-methylene-5,6,7,8-tetrahydrofolate binding. Residue Ser-263 coordinates (6R)-5,10-methylene-5,6,7,8-tetrahydrofolate.

This sequence belongs to the thymidylate synthase family. Bacterial-type ThyA subfamily. As to quaternary structure, homodimer.

It is found in the cytoplasm. The catalysed reaction is dUMP + (6R)-5,10-methylene-5,6,7,8-tetrahydrofolate = 7,8-dihydrofolate + dTMP. The protein operates within pyrimidine metabolism; dTTP biosynthesis. In terms of biological role, catalyzes the reductive methylation of 2'-deoxyuridine-5'-monophosphate (dUMP) to 2'-deoxythymidine-5'-monophosphate (dTMP) while utilizing 5,10-methylenetetrahydrofolate (mTHF) as the methyl donor and reductant in the reaction, yielding dihydrofolate (DHF) as a by-product. This enzymatic reaction provides an intracellular de novo source of dTMP, an essential precursor for DNA biosynthesis. This chain is Thymidylate synthase, found in Neisseria meningitidis serogroup A / serotype 4A (strain DSM 15465 / Z2491).